Reading from the N-terminus, the 355-residue chain is UDP-3-O-acylglucosamine N-acyltransferase (355 aa).

His-252 acts as the Proton acceptor in catalysis.

The protein belongs to the transferase hexapeptide repeat family. LpxD subfamily. In terms of assembly, homotrimer.

The enzyme catalyses a UDP-3-O-[(3R)-3-hydroxyacyl]-alpha-D-glucosamine + a (3R)-hydroxyacyl-[ACP] = a UDP-2-N,3-O-bis[(3R)-3-hydroxyacyl]-alpha-D-glucosamine + holo-[ACP] + H(+). It participates in bacterial outer membrane biogenesis; LPS lipid A biosynthesis. In terms of biological role, catalyzes the N-acylation of UDP-3-O-acylglucosamine using 3-hydroxyacyl-ACP as the acyl donor. Is involved in the biosynthesis of lipid A, a phosphorylated glycolipid that anchors the lipopolysaccharide to the outer membrane of the cell. This Polynucleobacter necessarius subsp. necessarius (strain STIR1) protein is UDP-3-O-acylglucosamine N-acyltransferase.